Reading from the N-terminus, the 55-residue chain is MVKLSKEAKQRLQQLFKGGQFAIRWGFIPLVIYLGFTRGADPGMPEPSVLSLLWG.

Residues 1–20 (MVKLSKEAKQRLQQLFKGGQ) are Cytoplasmic-facing. The helical transmembrane segment at 21 to 40 (FAIRWGFIPLVIYLGFTRGA) threads the bilayer. The Mitochondrial intermembrane portion of the chain corresponds to 41–55 (DPGMPEPSVLSLLWG).

It belongs to the Tom7 family. As to quaternary structure, forms part of the preprotein translocase complex of the outer mitochondrial membrane (TOM complex) which consists of at least 7 different proteins (TOMM5, TOMM6, TOMM7, TOMM20, TOMM22, TOMM40 and TOMM70).

It is found in the mitochondrion outer membrane. In terms of biological role, required for assembly and stability of the TOM complex. Positive regulator of PRKN translocation to damaged mitochondria. Acts probably by stabilizing PINK1 on the outer membrane of depolarized mitochondria. This Mus musculus (Mouse) protein is Mitochondrial import receptor subunit TOM7 homolog (Tomm7).